The following is a 210-amino-acid chain: Ribonuclease HII (210 aa).

Residues 18 to 210 (GLIAGVDEVG…FKPVKALLGL (193 aa)) form the RNase H type-2 domain. Positions 24, 25, and 116 each coordinate a divalent metal cation.

The protein belongs to the RNase HII family. Mn(2+) serves as cofactor. It depends on Mg(2+) as a cofactor.

The protein localises to the cytoplasm. The enzyme catalyses Endonucleolytic cleavage to 5'-phosphomonoester.. Endonuclease that specifically degrades the RNA of RNA-DNA hybrids. The sequence is that of Ribonuclease HII from Shewanella baltica (strain OS223).